Here is a 115-residue protein sequence, read N- to C-terminus: NADH-ubiquinone oxidoreductase chain 3 (115 aa).

A run of 3 helical transmembrane segments spans residues 3–23 (LMLT…IAFW), 55–75 (FFLV…LLPL), and 84–104 (LNTM…SLAY).

This sequence belongs to the complex I subunit 3 family. As to quaternary structure, core subunit of respiratory chain NADH dehydrogenase (Complex I) which is composed of 45 different subunits. Interacts with TMEM186. Interacts with TMEM242.

It localises to the mitochondrion inner membrane. It carries out the reaction a ubiquinone + NADH + 5 H(+)(in) = a ubiquinol + NAD(+) + 4 H(+)(out). Its function is as follows. Core subunit of the mitochondrial membrane respiratory chain NADH dehydrogenase (Complex I) which catalyzes electron transfer from NADH through the respiratory chain, using ubiquinone as an electron acceptor. Essential for the catalytic activity of complex I. This chain is NADH-ubiquinone oxidoreductase chain 3, found in Equus caballus (Horse).